The primary structure comprises 455 residues: EP1-like glycoprotein 1 (455 aa).

The first 22 residues, 1–22, serve as a signal peptide directing secretion; that stretch reads MLRFDYLLITALAISTVSVVMA. The Bulb-type lectin domain occupies 43–163; it reads TEYDASYRFL…HGKFVWQSFD (121 aa). 5 N-linked (GlcNAc...) asparagine glycosylation sites follow: N106, N191, N211, N241, and N289. C374 carries the S-nitrosocysteine modification. The region spanning 374-455 is the PAN domain; the sequence is CSGGKGKAVN…NTSSVAYIKY (82 aa). 2 cysteine pairs are disulfide-bonded: C410–C432 and C414–C420. N446 carries N-linked (GlcNAc...) asparagine glycosylation.

It is found in the secreted. It localises to the cell wall. The protein is EP1-like glycoprotein 1 of Arabidopsis thaliana (Mouse-ear cress).